A 218-amino-acid polypeptide reads, in one-letter code: Calcineurin B-like protein 5 (218 aa).

EF-hand domains follow at residues 35 to 69 (EVEA…FRNK), 70 to 105 (KTNL…FHPD), 107 to 142 (PEEQ…LLDE), and 151 to 186 (AVEM…NPYV).

It belongs to the calcineurin regulatory subunit family. Homodimer. As to expression, expressed at low levels in roots, shoots, culms, leaves and young spikelets.

Acts as a calcium sensor. CBL proteins interact with CIPK serine-threonine protein kinases. Binding of a CBL protein to the regulatory NAF domain of a CIPK protein lead to the activation of the kinase in a calcium-dependent manner. The protein is Calcineurin B-like protein 5 (CBL5) of Oryza sativa subsp. japonica (Rice).